A 328-amino-acid chain; its full sequence is Malate dehydrogenase (328 aa).

11-17 lines the NAD(+) pocket; it reads GAAGQIG. Residues Arg-94 and Arg-100 each contribute to the substrate site. NAD(+) is bound by residues Asn-107, Gln-114, and 131–133; that span reads VGN. Residues Asn-133 and Arg-164 each coordinate substrate. The Proton acceptor role is filled by His-189.

It belongs to the LDH/MDH superfamily. MDH type 2 family.

It carries out the reaction (S)-malate + NAD(+) = oxaloacetate + NADH + H(+). Catalyzes the reversible oxidation of malate to oxaloacetate. The polypeptide is Malate dehydrogenase (Xanthomonas euvesicatoria pv. vesicatoria (strain 85-10) (Xanthomonas campestris pv. vesicatoria)).